A 251-amino-acid chain; its full sequence is MFAEVLTIGDELLTGHTVDSNSAFIASKLTEQGYWVRRITTVGDDVEEIKAVVGEILARKPEVLVISGGLGPTHDDVTMLAVAEALGRKLVLCEKCLERIKAFYEKLYSEGYIDDPSLNEGRKKMAYLPEGAEPLENTGGAAPGAFIEHKGVKIFVLPGMPREMKAMLEKEVLPRLGRRKFLQRKFLAEITDESKLAPILREALERFNVRIHSSPKGFGKYIGLIIFAEDEGELEKTVEYLESRGIRLEEA.

It belongs to the CinA family.

This is Protein TK1472 from Thermococcus kodakarensis (strain ATCC BAA-918 / JCM 12380 / KOD1) (Pyrococcus kodakaraensis (strain KOD1)).